Here is a 421-residue protein sequence, read N- to C-terminus: Serine--tRNA ligase (421 aa).

229-231 (TAE) serves as a coordination point for L-serine. Residue 260–262 (RAE) participates in ATP binding. L-serine is bound at residue Glu283. 347 to 350 (EISS) provides a ligand contact to ATP. Ser383 is an L-serine binding site.

The protein belongs to the class-II aminoacyl-tRNA synthetase family. Type-1 seryl-tRNA synthetase subfamily. As to quaternary structure, homodimer. The tRNA molecule binds across the dimer.

It is found in the cytoplasm. The catalysed reaction is tRNA(Ser) + L-serine + ATP = L-seryl-tRNA(Ser) + AMP + diphosphate + H(+). It carries out the reaction tRNA(Sec) + L-serine + ATP = L-seryl-tRNA(Sec) + AMP + diphosphate + H(+). It functions in the pathway aminoacyl-tRNA biosynthesis; selenocysteinyl-tRNA(Sec) biosynthesis; L-seryl-tRNA(Sec) from L-serine and tRNA(Sec): step 1/1. Its function is as follows. Catalyzes the attachment of serine to tRNA(Ser). Is also able to aminoacylate tRNA(Sec) with serine, to form the misacylated tRNA L-seryl-tRNA(Sec), which will be further converted into selenocysteinyl-tRNA(Sec). The polypeptide is Serine--tRNA ligase (Desulfitobacterium hafniense (strain DSM 10664 / DCB-2)).